The primary structure comprises 428 residues: Mitochondrial import inner membrane translocase subunit TIM50-C (428 aa).

The helical transmembrane segment at 59 to 79 (LFTCTALPAAAPALFSILHTA) threads the bilayer. Topologically, residues 80–428 (RGYSSTTKQE…KQWSRNILGR (349 aa)) are mitochondrial intermembrane. The interval 112 to 138 (FPQTSPEVDSNAEQERKKREEEEEKEN) is disordered. The span at 124–138 (EQERKKREEEEEKEN) shows a compositional bias: basic and acidic residues. The region spanning 224–367 (YVQPRYTLVL…LDLIAFLKII (144 aa)) is the FCP1 homology domain.

It belongs to the TIM50 family. Component of the TIM23 complex at least composed of Tim23, Tim17 (Tim17a1, Tim17a2 or Tim17b1) and a Tim50.

The protein localises to the mitochondrion inner membrane. Functionally, essential component of the TIM23 complex, a complex that mediates the translocation of transit peptide-containing proteins across the mitochondrial inner membrane. This chain is Mitochondrial import inner membrane translocase subunit TIM50-C (ttm50), found in Drosophila melanogaster (Fruit fly).